The following is a 207-amino-acid chain: Cytochrome c biogenesis ATP-binding export protein CcmA 1 (207 aa).

The ABC transporter domain maps to 6 to 207; the sequence is LEALDLAGVR…KTSQTVRMGA (202 aa). ATP is bound at residue 38-45; sequence GENGSGKT.

This sequence belongs to the ABC transporter superfamily. CcmA exporter (TC 3.A.1.107) family. As to quaternary structure, the complex is composed of two ATP-binding proteins (CcmA) and two transmembrane proteins (CcmB).

The protein resides in the cell inner membrane. It carries out the reaction heme b(in) + ATP + H2O = heme b(out) + ADP + phosphate + H(+). Its function is as follows. Part of the ABC transporter complex CcmAB involved in the biogenesis of c-type cytochromes; once thought to export heme, this seems not to be the case, but its exact role is uncertain. Responsible for energy coupling to the transport system. This Cupriavidus metallidurans (strain ATCC 43123 / DSM 2839 / NBRC 102507 / CH34) (Ralstonia metallidurans) protein is Cytochrome c biogenesis ATP-binding export protein CcmA 1.